We begin with the raw amino-acid sequence, 446 residues long: MSIDINWEAATSGPDGEALAERIRSFIHDKFQQIALPRFIRSVEVNSFDFGTIKPELQIKDLCDPFEDFYEEDEDNEIGDGEVSDIQDRSPKPRPSSAGNERSAADAWQAEHPAFLDDRLCGRIEPHDVPIPSKEDPLASRPIRSPMSFGDPLNPYFFPRAGTPGIPGGTSNLGYYYMPLGGISGTQTPLSSVPRGPFSPGLRDASVFGEPSNSQRPNPSGPARRQSEIDIDTGNSRPSTADTLDSLNIHGIPDPVLPRSSDDAHPNVLPRRDNSPAPRRVREKRPEDLQVLCRLRYNGNIRLSLTALVLLDYPMPNFVGLPLKLNITGLTFDGVAVVAYIRKRVHFCFLSPEDADTLFGADDTNEAGHLQSRDSLAGGINDTSYSSRRPHDSLLRDVRVESEIGRKEDGKQVLKNVGKVEKFVLEQVRRIFEEEFVYPSFWTFLV.

Positions Met1 to Val446 constitute an SMP-LTD domain. A compositionally biased stretch (acidic residues) spans Asp75 to Asp85. 3 disordered regions span residues Asp75 to Asp106, Pro126 to Ser145, and Thr188 to Glu283. Positions Pro126–Leu138 are enriched in basic and acidic residues. Polar residues predominate over residues Thr233 to Ser246. Residues Ser260–Asn274 are compositionally biased toward basic and acidic residues.

It belongs to the MDM12 family. Component of the ER-mitochondria encounter structure (ERMES) or MDM complex, composed of MMM1, MDM10, MDM12 and MDM34. An MMM1 homodimer associates with one molecule of MDM12 on each side in a pairwise head-to-tail manner, and the SMP-LTD domains of MMM1 and MDM12 generate a continuous hydrophobic tunnel for phospholipid trafficking.

It localises to the mitochondrion outer membrane. The protein resides in the endoplasmic reticulum membrane. Component of the ERMES/MDM complex, which serves as a molecular tether to connect the endoplasmic reticulum (ER) and mitochondria. Components of this complex are involved in the control of mitochondrial shape and protein biogenesis, and function in nonvesicular lipid trafficking between the ER and mitochondria. MDM12 is required for the interaction of the ER-resident membrane protein MMM1 and the outer mitochondrial membrane-resident beta-barrel protein MDM10. The MDM12-MMM1 subcomplex functions in the major beta-barrel assembly pathway that is responsible for biogenesis of all mitochondrial outer membrane beta-barrel proteins, and acts in a late step after the SAM complex. The MDM10-MDM12-MMM1 subcomplex further acts in the TOM40-specific pathway after the action of the MDM12-MMM1 complex. Essential for establishing and maintaining the structure of mitochondria and maintenance of mtDNA nucleoids. The chain is Mitochondrial distribution and morphology protein 12 from Coccidioides immitis (strain RS) (Valley fever fungus).